Here is a 600-residue protein sequence, read N- to C-terminus: Adenine deaminase (600 aa).

It belongs to the metallo-dependent hydrolases superfamily. Adenine deaminase family. The cofactor is Mn(2+).

It carries out the reaction adenine + H2O + H(+) = hypoxanthine + NH4(+). This is Adenine deaminase from Bradyrhizobium sp. (strain BTAi1 / ATCC BAA-1182).